The following is a 720-amino-acid chain: DNA replication licensing factor mcm7 (720 aa).

The segment at 183–210 (CDQCGAETYQPIQSPTFMPLIMCPSREC) adopts a C4-type zinc-finger fold. The MCM domain maps to 331–537 (FYEKLAASIA…NDLRLAQHIT (207 aa)). ATP-binding residues include Y344, G383, A385, K386, S387, N488, R513, and R603. Positions 512–515 (SRFD) match the Arginine finger motif.

It belongs to the MCM family. In terms of assembly, component of the mcm2-7 complex (RLF-M). The complex forms a toroidal hexameric ring with the proposed subunit order mcm2-mcm6-mcm4-mcm7-mcm3-mcm5. The heterodimer of mmcm3/mcm5 interacts with mcm4, mmcm6, mcm7 and weakly with mcm2. The N-terminus is required for interaction with mmcm3, though this interaction may not be direct, and remains in a complex with mmcm3 throughout the cell cycle. Begins to associate with zmcm6 at the neurula stage. Component of the replisome complex. Component of the CMG helicase complex, composed of the mcm2-7 complex, the GINS complex and cdc45. Ubiquitinated by traip when forks converge following formation of DNA interstrand cross-links. Short ubiquitin chains on mcm7 promote recruitment of DNA glycosylase neil3. If the interstrand cross-link cannot be cleaved by neil3, the ubiquitin chains continue to grow on mcm7, promoting the unloading of the CMG helicase complex by the vcp/p97 ATPase.

Its subcellular location is the nucleus. The protein resides in the chromosome. The catalysed reaction is ATP + H2O = ADP + phosphate + H(+). Its function is as follows. Acts as a component of the mcm2-7 complex (mcm complex) which is the putative replicative helicase essential for 'once per cell cycle' DNA replication initiation and elongation in eukaryotic cells. The active ATPase sites in the mcm2-7 ring are formed through the interaction surfaces of two neighboring subunits such that a critical structure of a conserved arginine finger motif is provided in trans relative to the ATP-binding site of the Walker A box of the adjacent subunit. The six ATPase active sites, however, are likely to contribute differentially to the complex helicase activity. The existence of maternal and zygotic forms of mcm3 and mcm6 suggests that specific forms of mcm2-7 complexes may be used during different stages of development. This is DNA replication licensing factor mcm7 from Xenopus tropicalis (Western clawed frog).